An 87-amino-acid polypeptide reads, in one-letter code: UPF0473 protein Daud_0916 (87 aa).

Belongs to the UPF0473 family.

The polypeptide is UPF0473 protein Daud_0916 (Desulforudis audaxviator (strain MP104C)).